Here is a 373-residue protein sequence, read N- to C-terminus: Cyclin-A3-1 (373 aa).

A disordered region spans residues A50–A80.

Belongs to the cyclin family. Cyclin AB subfamily.

The chain is Cyclin-A3-1 (CYCA3-1) from Oryza sativa subsp. japonica (Rice).